Consider the following 427-residue polypeptide: MSAIVDIIGREILDSRGNPTVECDVLLESGTMGRAAVPSGASTGSREAIELRDGETGRYGGKGVLKAVEHINTEISEAIMGLDASEQAFLDKTLLELDGTDNKSRLGANAMLAVSMAVAKAAAEEAGLPLYRYFGGSGAMQLPVPMMNIVNGGAHANNSLDIQEFMIVPVSQPTFREALRCGAEVFHALKKILSDRGMSTAVGDEGGFAPNFGSNDECLSTILQAIEKAGYRAGEDVLLALDCAASEFYHDGKYQLAGEGLQLSSTEFADYLANLADKFPIVSIEDGMHESDWAGWKTLTDKLGKKVQLVGDDLFVTNTRILKEGIEKGIANSILIKINQIGTLTETFAAIEMAKRAGYTAVISHRSGETEDSTIADIAVGLNAGQIKTGSLSRSDRISKYNQLLRIEEDLGDIASYPGKSAFYNLR.

Gln-163 contributes to the (2R)-2-phosphoglycerate binding site. The active-site Proton donor is the Glu-205. Asp-242, Glu-285, and Asp-312 together coordinate Mg(2+). Residues Lys-337, Arg-366, Ser-367, and Lys-388 each coordinate (2R)-2-phosphoglycerate. Residue Lys-337 is the Proton acceptor of the active site.

It belongs to the enolase family. The cofactor is Mg(2+).

The protein localises to the cytoplasm. The protein resides in the secreted. Its subcellular location is the cell surface. The catalysed reaction is (2R)-2-phosphoglycerate = phosphoenolpyruvate + H2O. It participates in carbohydrate degradation; glycolysis; pyruvate from D-glyceraldehyde 3-phosphate: step 4/5. Its function is as follows. Catalyzes the reversible conversion of 2-phosphoglycerate (2-PG) into phosphoenolpyruvate (PEP). It is essential for the degradation of carbohydrates via glycolysis. The protein is Enolase of Paraburkholderia phytofirmans (strain DSM 17436 / LMG 22146 / PsJN) (Burkholderia phytofirmans).